A 460-amino-acid polypeptide reads, in one-letter code: Kynurenine 3-monooxygenase (460 aa).

The protein belongs to the aromatic-ring hydroxylase family. KMO subfamily. Requires FAD as cofactor.

It is found in the mitochondrion. It carries out the reaction L-kynurenine + NADPH + O2 + H(+) = 3-hydroxy-L-kynurenine + NADP(+) + H2O. Its pathway is cofactor biosynthesis; NAD(+) biosynthesis; quinolinate from L-kynurenine: step 1/3. In terms of biological role, catalyzes the hydroxylation of L-kynurenine (L-Kyn) to form 3-hydroxy-L-kynurenine (L-3OHKyn). Required for synthesis of quinolinic acid. This is Kynurenine 3-monooxygenase from Dictyostelium discoideum (Social amoeba).